The following is a 219-amino-acid chain: Histone H1.4 (219 aa).

Positions 1-15 (MSETAPAAPAAPAPA) are enriched in low complexity. Residues 1–41 (MSETAPAAPAAPAPAEKTPVKKKARKSAGAAKRKASGPPVS) are disordered. Position 2 is an N-acetylserine (Ser-2). Phosphoserine is present on Ser-2. Lys-17 is modified (N6-acetyllysine). Phosphothreonine is present on Thr-18. The span at 20-35 (VKKKARKSAGAAKRKA) shows a compositional bias: basic residues. An N6-acetyllysine; alternate modification is found at Lys-26. Position 26 is an N6-methyllysine; alternate (Lys-26). Lys-34 is modified (N6-(beta-hydroxybutyryl)lysine; alternate). Lys-34 is subject to N6-succinyllysine; alternate. Ser-36 is subject to Phosphoserine. Positions 36 to 109 (SGPPVSELIT…GASGSFKLNK (74 aa)) constitute an H15 domain. Lys-52 is modified (N6-(beta-hydroxybutyryl)lysine). Arg-54 carries the post-translational modification Citrulline. Lys-64, Lys-85, Lys-90, and Lys-106 each carry N6-(beta-hydroxybutyryl)lysine. A disordered region spans residues 91–219 (GTLVQTKGTG…KPKKAPAKKK (129 aa)). Residues 119-140 (KPKKAGAAKPKKPAGAAKKPKK) show a composition bias toward basic residues. Thr-146 is subject to Phosphothreonine. 2 stretches are compositionally biased toward basic residues: residues 149-160 (KGAKKTPKKAKK) and 168-185 (KKAK…KKAP). A Phosphoserine modification is found at Ser-187. Basic residues predominate over residues 192 to 219 (KAVKPKAAKPKAAKPKTAKPKKAPAKKK).

It belongs to the histone H1/H5 family. In terms of processing, H1 histones are progressively phosphorylated during the cell cycle, becoming maximally phosphorylated during late G2 phase and M phase, and being dephosphorylated sharply thereafter. Post-translationally, acetylated at Lys-26. Deacetylated at Lys-26 by SIRT1. Citrullination at Arg-54 (H1R54ci) by PADI4 takes place within the DNA-binding site of H1 and results in its displacement from chromatin and global chromatin decondensation, thereby promoting pluripotency and stem cell maintenance.

It localises to the nucleus. The protein localises to the chromosome. Histone H1 protein binds to linker DNA between nucleosomes forming the macromolecular structure known as the chromatin fiber. Histones H1 are necessary for the condensation of nucleosome chains into higher-order structured fibers. Also acts as a regulator of individual gene transcription through chromatin remodeling, nucleosome spacing and DNA methylation. This chain is Histone H1.4, found in Oryctolagus cuniculus (Rabbit).